The following is a 239-amino-acid chain: DNA repair protein RecO (239 aa).

Belongs to the RecO family.

In terms of biological role, involved in DNA repair and RecF pathway recombination. In Glaesserella parasuis serovar 5 (strain SH0165) (Haemophilus parasuis), this protein is DNA repair protein RecO.